Reading from the N-terminus, the 126-residue chain is Ribonuclease P protein component (126 aa).

This sequence belongs to the RnpA family. Consists of a catalytic RNA component (M1 or rnpB) and a protein subunit.

The catalysed reaction is Endonucleolytic cleavage of RNA, removing 5'-extranucleotides from tRNA precursor.. Its function is as follows. RNaseP catalyzes the removal of the 5'-leader sequence from pre-tRNA to produce the mature 5'-terminus. It can also cleave other RNA substrates such as 4.5S RNA. The protein component plays an auxiliary but essential role in vivo by binding to the 5'-leader sequence and broadening the substrate specificity of the ribozyme. This is Ribonuclease P protein component from Brevibacillus brevis (strain 47 / JCM 6285 / NBRC 100599).